The primary structure comprises 693 residues: TBC1 domain family member 14 (693 aa).

Ser91 carries the post-translational modification Phosphoserine. 2 disordered regions span residues Pro108 to Phe130 and Asn271 to Leu304. A compositionally biased stretch (basic and acidic residues) spans Asn271–Gly288. Position 295 is a phosphoserine (Ser295). One can recognise a Rab-GAP TBC domain in the interval Gly401–Gly611.

As to quaternary structure, interacts with ULK1. May interact with RAB11A and RAB11B, but does not exhibit any GTPase-activating activity toward these proteins. Interacts with TRAPPC8.

The protein localises to the golgi apparatus. It localises to the cis-Golgi network. Its subcellular location is the trans-Golgi network. Its function is as follows. Plays a role in the regulation of starvation-induced autophagosome formation. Together with the TRAPPIII complex, regulates a constitutive trafficking step from peripheral recycling endosomes to the early Golgi, maintaining the cycling pool of ATG9 required for initiation of autophagy. The polypeptide is TBC1 domain family member 14 (TBC1D14) (Homo sapiens (Human)).